Reading from the N-terminus, the 317-residue chain is Aquaporin-2 (317 aa).

Topologically, residues 1-75 (MSLRDDLTIN…RSQEFKMQHR (75 aa)) are cytoplasmic. A helical transmembrane segment spans residues 76 to 96 (EFLAEFIGTLILVLLTCGFCA). Residues 97–108 (EQTLNIEKSKSW) lie on the Extracellular side of the membrane. Residues 109 to 129 (LTSSLGSGLSVLIGICVAGHV) form a helical membrane-spanning segment. At 130–154 (SGGHLNPAITIAFWVFSGFPIRKVP) the chain is on the cytoplasmic side. An NPA 1 motif is present at residues 135-137 (NPA). The helical transmembrane segment at 155–175 (MYITAQLLGAFSGAALLYSIV) threads the bilayer. Residues 176–208 (EPAISQFDHGKRQILGELGTAGIFGTYPPLYVG) lie on the Extracellular side of the membrane. The chain crosses the membrane as a helical span at residues 209–229 (TGSAVASEVVGTAMLLLVVMV). Residues 230 to 242 (TGHPNNLPFRTAQ) lie on the Cytoplasmic side of the membrane. Residues 243 to 263 (GAMIALGVTTISLCIGYTSGF) form a helical membrane-spanning segment. The Extracellular segment spans residues 264 to 295 (SLNPARDFGPRLFTAVAGWGIDVFTVHHYYAL). The short motif at 266 to 268 (NPA) is the NPA 2 element. Residues 296–316 (VPMFAPILGGLAGGFIYTVFI) form a helical membrane-spanning segment. Position 317 (Asp317) is a topological domain, cytoplasmic.

It belongs to the MIP/aquaporin (TC 1.A.8) family.

The protein resides in the cell membrane. The catalysed reaction is H2O(in) = H2O(out). The enzyme catalyses glycerol(in) = glycerol(out). In terms of biological role, water channel required to facilitate the transport of water across membranes. Contributes to water uptake of spores during the early stages of spore germination. Aquaporins AQP1 and AQP2 act as extracellular pH sensors and enable the spores to hydrate under favorable conditions and to commence germination. Wounded vegetables and fruit present acidic pH, so the optimal pH range for germination is adapted to the relevant host pH. The polypeptide is Aquaporin-2 (Rhizopus delemar (strain RA 99-880 / ATCC MYA-4621 / FGSC 9543 / NRRL 43880) (Mucormycosis agent)).